We begin with the raw amino-acid sequence, 538 residues long: Endoglucanase 16 (538 aa).

An N-terminal signal peptide occupies residues 1–26; the sequence is MRWRRVGDVVAVALLLGAAAAAAAAA. D83 (nucleophile) is an active-site residue. Catalysis depends on residues H431, D483, and E492. The tract at residues 513 to 538 is disordered; the sequence is RQESPSTTTTTTATTSSPEMGLSVNR. Low complexity predominate over residues 516–530; the sequence is SPSTTTTTTATTSSP.

This sequence belongs to the glycosyl hydrolase 9 (cellulase E) family.

The protein localises to the secreted. The enzyme catalyses Endohydrolysis of (1-&gt;4)-beta-D-glucosidic linkages in cellulose, lichenin and cereal beta-D-glucans.. The chain is Endoglucanase 16 from Oryza sativa subsp. japonica (Rice).